We begin with the raw amino-acid sequence, 206 residues long: Large ribosomal subunit protein uL13z (206 aa).

Belongs to the universal ribosomal protein uL13 family.

In Arabidopsis thaliana (Mouse-ear cress), this protein is Large ribosomal subunit protein uL13z (RPL13AA).